The chain runs to 632 residues: Protein NSP-INTERACTING KINASE 3 (632 aa).

Positions 1–25 are cleaved as a signal peptide; the sequence is MEGVRFVVWRLGFLVFVWFFDISSA. Residues 26 to 238 lie on the Extracellular side of the membrane; it reads TLSPTGVNYE…GTRTNGHHVA (213 aa). The N-linked (GlcNAc...) asparagine glycan is linked to asparagine 96. LRR repeat units lie at residues 97–121, 122–145, 147–168, and 169–193; these read LTYL…IGRL, EKLQ…LGEL, NLNY…SLSK, and IEGL…SART. 4 N-linked (GlcNAc...) asparagine glycosylation sites follow: asparagine 131, asparagine 155, asparagine 181, and asparagine 210. Residues 239 to 259 traverse the membrane as a helical segment; the sequence is LAFAASFSAAFFVFFTSGMFL. The Cytoplasmic portion of the chain corresponds to 260–632; that stretch reads WWRYRRNKQI…VEAIELSGPR (373 aa). Position 298 is a phosphothreonine (threonine 298). Residues 301-584 enclose the Protein kinase domain; it reads FNSKNILGRG…EGDGLAERWE (284 aa). 307–315 contributes to the ATP binding site; that stretch reads LGRGGYGIV. The residue at position 324 (threonine 324) is a Phosphothreonine. Lysine 329 lines the ATP pocket. Phosphoserine occurs at positions 382 and 385. Positions 415-495 are interaction with geminivirus NSP protein; sequence YLHEQCDPKI…DVFGFGILLL (81 aa). The active-site Proton acceptor is aspartate 428. 3 positions are modified to phosphothreonine: threonine 461, threonine 462, and threonine 467. At tyrosine 475 the chain carries Phosphotyrosine. Residue serine 477 is modified to Phosphoserine. Threonine 478 carries the post-translational modification Phosphothreonine. Phosphoserine is present on serine 482. Threonine 557 is subject to Phosphothreonine.

The protein belongs to the protein kinase superfamily. Ser/Thr protein kinase family. In terms of assembly, oligomer. Interacts with geminivirus nuclear shuttle protein (NSP). Post-translationally, autophosphorylated. In terms of tissue distribution, expressed in seedlings, leaves and flowers.

It is found in the cell membrane. It catalyses the reaction L-seryl-[protein] + ATP = O-phospho-L-seryl-[protein] + ADP + H(+). The catalysed reaction is L-threonyl-[protein] + ATP = O-phospho-L-threonyl-[protein] + ADP + H(+). Its activity is regulated as follows. Inhibited by the viral nuclear shuttle protein (NSP) that binds to the region required for oligomerization. Functionally, involved in defense response to geminivirus infection. The protein is Protein NSP-INTERACTING KINASE 3 (NIK3) of Arabidopsis thaliana (Mouse-ear cress).